The sequence spans 336 residues: Potassium channel subfamily K member 1 (336 aa).

The Cytoplasmic segment spans residues 1–20; it reads MLQSLAGSSCVRLVERHRSA. A helical membrane pass occupies residues 21 to 41; that stretch reads WCFGFLVLGYLLYLVFGAVVF. The Extracellular portion of the chain corresponds to 42-103; it reads SSVELPYEDL…SNASGNWNWD (62 aa). Asn95 carries an N-linked (GlcNAc...) asparagine glycan. Residues 104-116 constitute an intramembrane region (helical); it reads FASALFFASTVLS. Residues 117 to 122 lie within the membrane without spanning it; that stretch reads TTGYGH. The selectivity filter 1 stretch occupies residues 117–122; the sequence is TTGYGH. Residues 123 to 132 are Extracellular-facing; the sequence is TVPLSDGGKA. The chain crosses the membrane as a helical span at residues 133-156; it reads FCIIYSVIGIPFTLLFLTAVVQRV. At 157–181 the chain is on the cytoplasmic side; it reads TVHVTRRPVLYFHVRWGFSKQVVAI. The helical transmembrane segment at 182–202 threads the bilayer; the sequence is VHAVLLGLITVSCFFFIPAAV. Topologically, residues 203–211 are extracellular; it reads FSVLEDDWN. Positions 212 to 224 form an intramembrane region, helical; it reads FLESFYFCFISLS. A selectivity filter 2 region spans residues 225–230; that stretch reads TIGLGD. The stretch at 225-231 is an intramembrane region; it reads TIGLGDY. The Extracellular segment spans residues 232 to 243; that stretch reads VPGEGYNQKFRE. Residues 244–267 traverse the membrane as a helical segment; that stretch reads LYKIGITCYLLLGLIAMLVVLETF. Residues 268-336 are Cytoplasmic-facing; sequence CELHELKKFR…SACADGPANH (69 aa). Lys274 is covalently cross-linked (Glycyl lysine isopeptide (Lys-Gly) (interchain with G-Cter in SUMO)). The tract at residues 293–299 is important for intracellular retention in recycling endosomes; it reads IIEHDQL. Residues 315–336 are disordered; it reads QKQNEPFVATPSSACADGPANH. A Phosphoserine modification is found at Ser326.

The protein belongs to the two pore domain potassium channel (TC 1.A.1.8) family. In terms of assembly, homodimer; disulfide-linked. Heterodimer with KCNK2; disulfide-linked. In astrocytes, forms mostly heterodimeric potassium channels with KCNK2, with only a minor proportion of functional channels containing homodimeric KCNK1. Interacts with KCNK3 and KCNK9, forming functional heterodimeric channels. Interacts with GNG4. Identified in a complex with PSD and ARF6; interacts only with PSD that is bound to ARF6. Interacts with UBE2I. In terms of processing, sumoylation is controversial. Sumoylated by UBE2I. Not sumoylated when expressed in xenopus oocytes or mammalian cells. Sumoylation inactivates the channel, but does not interfere with expression at the cell membrane. Sumoylation of a single subunit is sufficient to silence the dimeric channel. Sumoylation of KCNK1 is sufficient to silence heterodimeric channels formed by KCNK1 and KCNK3 or KCNK9. Desumoylated by SENP1; this activates the channel. Desumoylated by SENP1; this strongly increases halothane-mediated activation of heterodimeric channels formed with KCNK9. SENP1 treatment has no effect. As to expression, expressed in renal distal tubules, especially in cortical collecting duct and cortical thick ascending limb, with lower levels in the connecting tubule.

Its subcellular location is the cell membrane. The protein resides in the recycling endosome. The protein localises to the synaptic cell membrane. It is found in the cytoplasmic vesicle. It localises to the perikaryon. Its subcellular location is the cell projection. The protein resides in the dendrite. The protein localises to the apical cell membrane. It catalyses the reaction K(+)(in) = K(+)(out). The enzyme catalyses NH4(+)(in) = NH4(+)(out). The catalysed reaction is Na(+)(in) = Na(+)(out). It carries out the reaction Rb(+)(in) = Rb(+)(out). It catalyses the reaction Cs(+)(in) = Cs(+)(out). The enzyme catalyses Li(+)(in) = Li(+)(out). The catalysed reaction is L-glutamate(out) = L-glutamate(in). It carries out the reaction chloride(in) = chloride(out). Ion channel that contributes to passive transmembrane potassium transport and to the regulation of the resting membrane potential in brain astrocytes, but also in kidney and in other tissues. Forms dimeric channels through which potassium ions pass in accordance with their electrochemical gradient. The channel is selective for K(+) ions at physiological potassium concentrations and at neutral pH, but becomes permeable to Na(+) at subphysiological K(+) levels and upon acidification of the extracellular medium. The homodimer has very low potassium channel activity, when expressed in heterologous systems, and can function as weakly inward rectifying potassium channel. Channel activity is modulated by activation of serotonin receptors. Heterodimeric channels containing KCNK1 and KCNK2 have much higher activity, and may represent the predominant form in astrocytes. Heterodimeric channels containing KCNK1 and KCNK3 or KCNK9 have much higher activity. Heterodimeric channels formed by KCNK1 and KCNK9 may contribute to halothane-sensitive currents. Mediates outward rectifying potassium currents in dentate gyrus granule cells and contributes to the regulation of their resting membrane potential. Contributes to the regulation of action potential firing in dentate gyrus granule cells and down-regulates their intrinsic excitability. In astrocytes, the heterodimer formed by KCNK1 and KCNK2 is required for rapid glutamate release in response to activation of G-protein coupled receptors, such as F2R and CNR1. Required for normal ion and water transport in the kidney. Contributes to the regulation of the resting membrane potential of pancreatic beta cells. The low channel activity of homodimeric KCNK1 may be due to sumoylation. The low channel activity may be due to rapid internalization from the cell membrane and retention in recycling endosomes. Permeable to monovalent cations with ion selectivity for K(+) &gt; Rb(+) &gt;&gt; NH4(+) &gt;&gt; Cs(+) = Na(+) = Li(+). This is Potassium channel subfamily K member 1 from Oryctolagus cuniculus (Rabbit).